The chain runs to 229 residues: Peptidase E (229 aa).

Residues S120, D135, and H157 each act as charge relay system in the active site.

The protein belongs to the peptidase S51 family.

The protein localises to the cytoplasm. It carries out the reaction Dipeptidase E catalyzes the hydrolysis of dipeptides Asp-|-Xaa. It does not act on peptides with N-terminal Glu, Asn or Gln, nor does it cleave isoaspartyl peptides.. Functionally, hydrolyzes dipeptides containing N-terminal aspartate residues. May play a role in allowing the cell to use peptide aspartate to spare carbon otherwise required for the synthesis of the aspartate family of amino acids. The protein is Peptidase E (pepE) of Salmonella typhimurium (strain LT2 / SGSC1412 / ATCC 700720).